We begin with the raw amino-acid sequence, 769 residues long: TSC22 domain family protein 2 (769 aa).

4 disordered regions span residues 20–86 (AQVA…TVSP), 224–292 (HGLD…PQPM), 334–353 (AQPG…YPQP), and 520–563 (VPAP…SLPQ). Positions 28 to 37 (EDTESLDDPD) are enriched in acidic residues. Over residues 229-252 (GTDSSLTAVSQLPPSEKMSQPTLA) the composition is skewed to polar residues. The span at 269-279 (GGAVAPSSASL) shows a compositional bias: low complexity. The segment covering 531-541 (SSHTPVSRSSS) has biased composition (low complexity). Polar residues predominate over residues 542–563 (VIQQVGSPLAQGTHSAPTSLPQ). A coiled-coil region spans residues 691–725 (MYAVREEVEVLKEQIKELVERNSLLERENALLKSL). Residues 726-745 (SNNDQLSQLPAQQANPGSTS) are compositionally biased toward polar residues. A disordered region spans residues 726-769 (SNNDQLSQLPAQQANPGSTSQQQAMIAQPPQPTQPPQQPNVSSA). A compositionally biased stretch (pro residues) spans 754 to 763 (PPQPTQPPQQ).

It belongs to the TSC-22/Dip/Bun family. As to quaternary structure, interacts with NRBP1. Interacts with PKM isoform M2; the interaction results in reduced nuclear levels of PKM isoform M2, leading to repression of cyclin CCND1 transcription and reduced cell growth. Interacts with WDR77. In terms of tissue distribution, expressed in the cortex, medulla and papilla of the kidney. Expressed in the kidney.

In terms of biological role, reduces the level of nuclear PKM isoform M2 which results in repression of cyclin CCND1 transcription and reduced cell growth. Its function is as follows. May protect kidney cells from hyperosmotic stress. The protein is TSC22 domain family protein 2 of Mus musculus (Mouse).